We begin with the raw amino-acid sequence, 383 residues long: 1-deoxy-D-xylulose 5-phosphate reductoisomerase (383 aa).

8 residues coordinate NADPH: threonine 10, glycine 11, serine 12, isoleucine 13, glycine 36, lysine 37, asparagine 38, and asparagine 122. Lysine 123 contributes to the 1-deoxy-D-xylulose 5-phosphate binding site. Glutamate 124 serves as a coordination point for NADPH. Residue aspartate 148 participates in Mn(2+) binding. Residues serine 149, glutamate 150, serine 174, and histidine 197 each coordinate 1-deoxy-D-xylulose 5-phosphate. Glutamate 150 is a binding site for Mn(2+). Residue glycine 203 coordinates NADPH. Residues serine 210, asparagine 215, lysine 216, and glutamate 219 each contribute to the 1-deoxy-D-xylulose 5-phosphate site. Glutamate 219 provides a ligand contact to Mn(2+).

Belongs to the DXR family. Requires Mg(2+) as cofactor. The cofactor is Mn(2+).

It carries out the reaction 2-C-methyl-D-erythritol 4-phosphate + NADP(+) = 1-deoxy-D-xylulose 5-phosphate + NADPH + H(+). It participates in isoprenoid biosynthesis; isopentenyl diphosphate biosynthesis via DXP pathway; isopentenyl diphosphate from 1-deoxy-D-xylulose 5-phosphate: step 1/6. Catalyzes the NADPH-dependent rearrangement and reduction of 1-deoxy-D-xylulose-5-phosphate (DXP) to 2-C-methyl-D-erythritol 4-phosphate (MEP). The polypeptide is 1-deoxy-D-xylulose 5-phosphate reductoisomerase (Bacillus velezensis (strain DSM 23117 / BGSC 10A6 / LMG 26770 / FZB42) (Bacillus amyloliquefaciens subsp. plantarum)).